The sequence spans 537 residues: CTP synthase (537 aa).

Positions 1 to 265 (MVHFIFVTGG…DNKVLKFFNI (265 aa)) are amidoligase domain. S13 contributes to the CTP binding site. UTP is bound at residue S13. ATP is bound by residues 14–19 (SLGKGL) and D71. Residues D71 and E139 each coordinate Mg(2+). CTP-binding positions include 146–148 (DIE) and K222. K222 lines the UTP pocket. The 247-residue stretch at 290–536 (RIAIIAKYHK…IKAAIEYNKC (247 aa)) folds into the Glutamine amidotransferase type-1 domain. G352 is an L-glutamine binding site. The active-site Nucleophile; for glutamine hydrolysis is the C379. Residues 380–383 (FGMQ), E403, and R464 each bind L-glutamine. Catalysis depends on residues H509 and E511.

It belongs to the CTP synthase family. As to quaternary structure, homotetramer.

The enzyme catalyses UTP + L-glutamine + ATP + H2O = CTP + L-glutamate + ADP + phosphate + 2 H(+). It catalyses the reaction L-glutamine + H2O = L-glutamate + NH4(+). The catalysed reaction is UTP + NH4(+) + ATP = CTP + ADP + phosphate + 2 H(+). It participates in pyrimidine metabolism; CTP biosynthesis via de novo pathway; CTP from UDP: step 2/2. With respect to regulation, allosterically activated by GTP, when glutamine is the substrate; GTP has no effect on the reaction when ammonia is the substrate. The allosteric effector GTP functions by stabilizing the protein conformation that binds the tetrahedral intermediate(s) formed during glutamine hydrolysis. Inhibited by the product CTP, via allosteric rather than competitive inhibition. In terms of biological role, catalyzes the ATP-dependent amination of UTP to CTP with either L-glutamine or ammonia as the source of nitrogen. Regulates intracellular CTP levels through interactions with the four ribonucleotide triphosphates. This is CTP synthase from Rickettsia rickettsii (strain Iowa).